Consider the following 132-residue polypeptide: Phycocyanin PC645 alpha-1 subunit (132 aa).

D54 and R68 together coordinate (2R,3E)-phycocyanobilin. 4 residues coordinate mesobiliverdin: C70, Q76, Y77, and K92. Residues P123 and I125 each contribute to the 15,16-dihydrobiliverdin site.

The protein belongs to the phycoerythrin family. As to quaternary structure, heterotetramer of 2 different alpha chains and 2 identical beta chains which form 2 alpha-beta heterodimers within the heterotetramer. In terms of processing, contains two phycocyanobilin chromophores, one mesobiliverdin chromophore and one 15,16-dihydrobiliverdin chromophore with binding mediated by both the alpha and beta subunits.

The protein resides in the plastid. It is found in the chloroplast thylakoid membrane. Its function is as follows. Light-harvesting photosynthetic tetrapyrrole chromophore-protein from the phycobiliprotein complex. This is Phycocyanin PC645 alpha-1 subunit from Chroomonas sp. (strain CCMP270).